Consider the following 507-residue polypeptide: Cytochrome P450 3A28 (507 aa).

C442 contacts heme.

This sequence belongs to the cytochrome P450 family. It depends on heme as a cofactor.

The protein localises to the endoplasmic reticulum membrane. Its subcellular location is the microsome membrane. The catalysed reaction is an organic molecule + reduced [NADPH--hemoprotein reductase] + O2 = an alcohol + oxidized [NADPH--hemoprotein reductase] + H2O + H(+). Functionally, cytochromes P450 are a group of heme-thiolate monooxygenases. In liver microsomes, this enzyme is involved in an NADPH-dependent electron transport pathway. It oxidizes a variety of structurally unrelated compounds, including steroids, fatty acids, and xenobiotics. This Bos taurus (Bovine) protein is Cytochrome P450 3A28 (CYP3A28).